The sequence spans 427 residues: V-type proton ATPase subunit C 2 (427 aa).

Residues 292–319 (HKVKVTPLGNPDRPAAGQTDRERESEGE) form a disordered region.

It belongs to the V-ATPase C subunit family. V-ATPase is a heteromultimeric enzyme made up of two complexes: the ATP-hydrolytic V1 complex and the proton translocation V0 complex. The V1 complex consists of three catalytic AB heterodimers that form a heterohexamer, three peripheral stalks each consisting of EG heterodimers, one central rotor including subunits D and F, and the regulatory subunits C and H. The proton translocation complex V0 consists of the proton transport subunit a, a ring of proteolipid subunits c9c'', rotary subunit d, subunits e and f, and the accessory subunits ATP6AP1/Ac45 and ATP6AP2/PRR. In terms of tissue distribution, kidney and placenta.

Functionally, subunit of the V1 complex of vacuolar(H+)-ATPase (V-ATPase), a multisubunit enzyme composed of a peripheral complex (V1) that hydrolyzes ATP and a membrane integral complex (V0) that translocates protons. V-ATPase is responsible for acidifying and maintaining the pH of intracellular compartments and in some cell types, is targeted to the plasma membrane, where it is responsible for acidifying the extracellular environment. Subunit C is necessary for the assembly of the catalytic sector of the enzyme and is likely to have a specific function in its catalytic activity. The protein is V-type proton ATPase subunit C 2 (ATP6V1C2) of Homo sapiens (Human).